The following is a 669-amino-acid chain: Zinc finger CCCH domain-containing protein 17 (669 aa).

Residues 1–11 are compositionally biased toward low complexity; it reads MFAPATQPQQQ. The disordered stretch occupies residues 1 to 23; it reads MFAPATQPQQQHEQKKQSETVSS. 3 consecutive C3H1-type zinc fingers follow at residues 34-58, 60-86, and 114-141; these read DCVY…HSEY, RMNP…HPPL, and AKQP…HTPN. 4 disordered regions span residues 150 to 175, 285 to 306, 376 to 589, and 642 to 669; these read PVEA…EKKL, VEDR…PDFS, GMRL…VMEE, and EEGE…EMLS. Composition is skewed to basic and acidic residues over residues 164-175, 285-299, 392-406, 420-464, 478-499, and 547-579; these read KPIENNTEEKKL, VEDR…RGNS, SMDR…DTPR, KLRE…EENH, RRRE…ESKP, and NNKD…PKAE. Composition is skewed to acidic residues over residues 580-589 and 642-659; these read VEEEGTVMEE and EEGE…GEED. Basic and acidic residues predominate over residues 660 to 669; the sequence is IEKKTVEMLS.

The chain is Zinc finger CCCH domain-containing protein 17 from Arabidopsis thaliana (Mouse-ear cress).